A 338-amino-acid polypeptide reads, in one-letter code: Ribonucleoside-diphosphate reductase small subunit (338 aa).

The Fe cation site is built by aspartate 81, glutamate 112, and histidine 115. Tyrosine 119 is an active-site residue. Residues glutamate 174, glutamate 208, and histidine 211 each contribute to the Fe cation site.

It belongs to the ribonucleoside diphosphate reductase small chain family. In terms of assembly, heterodimer of a large and a small subunit. Requires Fe cation as cofactor.

The protein resides in the cytoplasm. The enzyme catalyses a 2'-deoxyribonucleoside 5'-diphosphate + [thioredoxin]-disulfide + H2O = a ribonucleoside 5'-diphosphate + [thioredoxin]-dithiol. Provides the precursors necessary for DNA synthesis. Catalyzes the biosynthesis of deoxyribonucleotides from the corresponding ribonucleotides. This Dictyostelium discoideum (Social amoeba) protein is Ribonucleoside-diphosphate reductase small subunit (rnrB-1).